Reading from the N-terminus, the 837-residue chain is Telomere length regulation protein TEL2 homolog (837 aa).

Met1 bears the N-acetylmethionine mark. Pro374, Pro419, and Pro422 each carry hydroxyproline. The interval 444–472 is disordered; the sequence is QPAGDGASEAGTSLVPATAEPPAETPAEI. Position 456 is a phosphoserine (Ser456). The segment covering 459–471 has biased composition (low complexity); that stretch reads PATAEPPAETPAE. Ser485 is subject to Phosphoserine; by CK2. Phosphoserine occurs at positions 487 and 491. A disordered region spans residues 627–651; it reads GCLGRTPQPGSPSPNTPCLPEAAVS. Phosphoserine is present on residues Ser688 and Ser836.

It belongs to the TEL2 family. As to quaternary structure, component of the TTT complex composed of TELO2, TTI1 and TTI2. Interacts with ATM, ATR, MTOR, PRKDC, RUVBL2, TTI1, TTI2, SMG1 and TRRAP. Component of the mTORC1 and mTORC2 complexes. Interacts (phosphorylated form) with PIH1D1 which mediates interaction of TELO2 with the R2TP complex composed of RUVBL1, RUVBL2, PIH1D1, and RPAP3. Post-translationally, hydroxylation by PHD3 is required for a proper interaction with ATR, and activation of the ATR/CHK1/p53 pathway following DNA damage. Phosphorylated at Ser-485 by CK2 following growth factor deprivation, leading to its subsequent ubiquitination by the SCF(FBXO9) complex. Phosphorylation by CK2 only takes place when TELO2 is bound to mTORC1, not mTORC2; leading to selective ubiquitination of mTORC1-associated protein. In terms of processing, ubiquitinated by the SCF(FBXO9) complex following phosphorylation by CK2 in response to growth factor deprivation, leading to its degradation by the proteasome. Only mTORC1-associated protein is ubiquitinated and degraded, leading to selective inactivation of mTORC1 to restrain cell growth and protein translation, while mTORC2 is activated due to the relief of feedback inhibition by mTORC1.

The protein resides in the cytoplasm. The protein localises to the membrane. It localises to the nucleus. It is found in the chromosome. Its subcellular location is the telomere. In terms of biological role, regulator of the DNA damage response (DDR). Part of the TTT complex that is required to stabilize protein levels of the phosphatidylinositol 3-kinase-related protein kinase (PIKK) family proteins. The TTT complex is involved in the cellular resistance to DNA damage stresses, like ionizing radiation (IR), ultraviolet (UV) and mitomycin C (MMC). Together with the TTT complex and HSP90 may participate in the proper folding of newly synthesized PIKKs. Promotes assembly, stabilizes and maintains the activity of mTORC1 and mTORC2 complexes, which regulate cell growth and survival in response to nutrient and hormonal signals. May be involved in telomere length regulation. This Homo sapiens (Human) protein is Telomere length regulation protein TEL2 homolog (TELO2).